The sequence spans 462 residues: Kinetochore protein Nuf2-B (462 aa).

The stretch at 143-462 forms a coiled coil; it reads SGYKSALENV…AELNRRLSRQ (320 aa). Residues 236–259 form a disordered region; sequence EQERMKSQIVESPEQRKSKTERMK. Residues 248–259 show a composition bias toward basic and acidic residues; the sequence is PEQRKSKTERMK.

It belongs to the NUF2 family. Component of the NDC80 complex, which is composed of ndc80, cdca1, spbc24 and spbc25. The NDC80 complex interacts with mis12 and zwint.

The protein localises to the nucleus. The protein resides in the chromosome. It is found in the centromere. It localises to the kinetochore. In terms of biological role, acts as a component of the essential kinetochore-associated NDC80 complex, which is required for chromosome segregation and spindle checkpoint activity. Required for kinetochore integrity and the organization of stable microtubule binding sites in the outer plate of the kinetochore. The NDC80 complex synergistically enhances the affinity of the SKA1 complex for microtubules and may allow the NDC80 complex to track depolymerizing microtubules. The polypeptide is Kinetochore protein Nuf2-B (nuf2-b) (Xenopus laevis (African clawed frog)).